The following is a 73-amino-acid chain: Sec-independent protein translocase protein TatA (73 aa).

The helical transmembrane segment at 1 to 21 threads the bilayer; that stretch reads MGSFSIWHWLIVLVIVMLVFG. Residues 50-73 are disordered; that stretch reads KEQIQQSSATAEKTVDVQAKDVNK. A compositionally biased stretch (basic and acidic residues) spans 62-73; it reads KTVDVQAKDVNK.

Belongs to the TatA/E family. The Tat system comprises two distinct complexes: a TatABC complex, containing multiple copies of TatA, TatB and TatC subunits, and a separate TatA complex, containing only TatA subunits. Substrates initially bind to the TatABC complex, which probably triggers association of the separate TatA complex to form the active translocon.

Its subcellular location is the cell inner membrane. Functionally, part of the twin-arginine translocation (Tat) system that transports large folded proteins containing a characteristic twin-arginine motif in their signal peptide across membranes. TatA could form the protein-conducting channel of the Tat system. The chain is Sec-independent protein translocase protein TatA from Polynucleobacter necessarius subsp. necessarius (strain STIR1).